A 288-amino-acid polypeptide reads, in one-letter code: UDP-3-O-acyl-N-acetylglucosamine deacetylase (288 aa).

Histidine 79, histidine 236, and aspartate 240 together coordinate Zn(2+). Histidine 263 serves as the catalytic Proton donor.

It belongs to the LpxC family. Zn(2+) is required as a cofactor.

It catalyses the reaction a UDP-3-O-[(3R)-3-hydroxyacyl]-N-acetyl-alpha-D-glucosamine + H2O = a UDP-3-O-[(3R)-3-hydroxyacyl]-alpha-D-glucosamine + acetate. The protein operates within glycolipid biosynthesis; lipid IV(A) biosynthesis; lipid IV(A) from (3R)-3-hydroxytetradecanoyl-[acyl-carrier-protein] and UDP-N-acetyl-alpha-D-glucosamine: step 2/6. In terms of biological role, catalyzes the hydrolysis of UDP-3-O-myristoyl-N-acetylglucosamine to form UDP-3-O-myristoylglucosamine and acetate, the committed step in lipid A biosynthesis. This Rickettsia bellii (strain OSU 85-389) protein is UDP-3-O-acyl-N-acetylglucosamine deacetylase.